The primary structure comprises 204 residues: MGLIVDDDNDGEVLIPPPNFSMVEDEIYRSGFPELENFGFLSTLNLRSIIYLCPEPYPEDNLKSLASNNIKLFQFGIEGKTDPPTPMPKDTVLSALRVLVDVRNHPILIHCKRGKHRTGCLVGCLRKVQNWCLSSVLEEYQKCAGLKWRQRDLRFIEDFDVLRLKQCLYSIIYQYNGYGLKRRKLLYQEENVVQEQQKPQATKG.

Residues 19-168 (NFSMVEDEIY…FDVLRLKQCL (150 aa)) form the Tyrosine-protein phosphatase domain. Positions 75 to 87 (FGIEGKTDPPTPM) are WPD loop important for active site topology. Cys-111 acts as the Phosphocysteine intermediate in catalysis.

It belongs to the protein-tyrosine phosphatase family. Atypical dual-specificity phosphatase Siw14-like subfamily. As to expression, highly expressed in flowers. Expressed at low levels in roots, leaves, stems and siliques.

It catalyses the reaction 5-diphospho-1D-myo-inositol 1,2,3,4,6-pentakisphosphate + H2O = 1D-myo-inositol hexakisphosphate + phosphate + H(+). The enzyme catalyses 1,5-bis(diphospho)-1D-myo-inositol 2,3,4,6-tetrakisphosphate + H2O = 1-diphospho-1D-myo-inositol 2,3,4,5,6-pentakisphosphate + phosphate + 2 H(+). It carries out the reaction 3,5-bis(diphospho)-1D-myo-inositol 1,2,4,6-tetrakisphosphate + H2O = 3-diphospho-1D-myo-inositol 1,2,4,5,6-pentakisphosphate + phosphate + 2 H(+). The catalysed reaction is 6-diphospho-1D-myo-inositol pentakisphosphate + H2O = 1D-myo-inositol hexakisphosphate + phosphate + H(+). Functionally, cleaves the beta-phosphate at the 5-position of soluble inositol pyrophosphates. Has highest activity on 5-diphosphoinositol 1,2,3,4,6-pentakisphosphate (5-InsP(7)). Possesses low phosphotyrosine phosphatase activity in vitro. Dephosphorylates the phosphoinositides PI(3,5)P2. Hydrolyzes O-methylfluorescein phosphate in vitro. This chain is Inositol diphosphatase DSP5, found in Arabidopsis thaliana (Mouse-ear cress).